Reading from the N-terminus, the 464-residue chain is Protein FAM90A13 (464 aa).

Disordered stretches follow at residues 1 to 42 (MMAR…DPRL), 69 to 389 (VPAT…HDGA), and 411 to 437 (APSF…SEAP). Basic and acidic residues-rich tracts occupy residues 74 to 89 (GKKE…KPRG) and 97 to 114 (NKDK…DPQR). The segment covering 180–197 (LASLSPLRKASLSSSSSL) has biased composition (low complexity).

It belongs to the FAM90 family.

The sequence is that of Protein FAM90A13 from Homo sapiens (Human).